Here is a 960-residue protein sequence, read N- to C-terminus: Chromo domain-containing protein 1 (960 aa).

Positions Tyr-22 to Lys-74 constitute a Chromo domain.

In terms of assembly, ago1, chp1 and tas3 interact to form the core of the RNA-induced transcriptional silencing (RITS) complex. The RITS complex interacts with the RDRC complex via interaction between ago1 and hrr1. Clr4 has a role in mediating this interaction. Interacts with dri1.

The protein resides in the nucleus. The protein localises to the cytoplasm. Its subcellular location is the cytoskeleton. It is found in the microtubule organizing center. It localises to the spindle pole body. In terms of biological role, component of the kinetochore which plays a role in stabilizing microtubules and so allowing accurate chromosome segregation. Has a role in the RNA interference (RNAi) pathway which is important for heterochromatin formation and accurate chromosome segregation. A member of the RNA-induced transcriptional silencing (RITS) complex which is involved in the biosynthesis of dsRNA from primer siRNAs provided by the RNA-directed RNA polymerase (RDRC) complex. The sequence is that of Chromo domain-containing protein 1 from Schizosaccharomyces pombe (strain 972 / ATCC 24843) (Fission yeast).